Reading from the N-terminus, the 458-residue chain is Selection and upkeep of intraepithelial T-cells protein 3 (458 aa).

The signal sequence occupies residues 1 to 24; it reads MGSIQIIFAAYCVVLCVLQMLVLS. The Extracellular portion of the chain corresponds to 25–237; it reads SEQFTITGLE…ESISIVLTGD (213 aa). In terms of domain architecture, Ig-like V-type spans 26 to 141; the sequence is EQFTITGLER…EEHITEVKVT (116 aa). Disulfide bonds link Cys49/Cys123 and Cys163/Cys217. Positions 142 to 231 constitute an Ig-like C1-type domain; the sequence is ATSSDIKIIM…LLTHQEESIS (90 aa). A glycan (N-linked (GlcNAc...) asparagine) is linked at Asn200. A helical transmembrane segment spans residues 238–258; it reads LFSWKIDWILILSIIACVMIP. The Cytoplasmic portion of the chain corresponds to 259 to 283; that stretch reads YSMTSYLQQHLIHGSCSQRSHHWRK. Residues 284–304 form a helical membrane-spanning segment; the sequence is NAMVCMSSVIAIIGSMLILHL. The Extracellular portion of the chain corresponds to 305-324; that stretch reads KQRVPISDQHFELDTLYLED. Residues 325–345 traverse the membrane as a helical segment; sequence ISVILCVVIVFNLKLNLLTYY. Topologically, residues 346-359 are cytoplasmic; that stretch reads RLERKYDGCTPGCK. The helical transmembrane segment at 360–380 threads the bilayer; sequence ACFYILKIIIIILPFVFTFGC. Over 381–414 the chain is Extracellular; the sequence is YNAIFLKYHQLQKKVSIPDPLYYFYTSWLVNMEM. Residues 415-435 form a helical membrane-spanning segment; that stretch reads LGVFLVFFPTFINLIEFSQFI. Residues 436 to 458 are Cytoplasmic-facing; the sequence is KTVPKPIWLCQENMREDDAIRHR.

This sequence belongs to the SKINT family. Expressed in skin and thymus.

It is found in the membrane. In terms of biological role, may act by engaging a cell surface molecule on immature T-cells in the embryonic thymus. In Mus musculus (Mouse), this protein is Selection and upkeep of intraepithelial T-cells protein 3 (Skint3).